The chain runs to 239 residues: Endoglucanase A (239 aa).

The N-terminal stretch at 1 to 16 is a signal peptide; that stretch reads MKLSMTLSLFAATAMG.

Belongs to the glycosyl hydrolase 12 (cellulase H) family.

The enzyme catalyses Endohydrolysis of (1-&gt;4)-beta-D-glucosidic linkages in cellulose, lichenin and cereal beta-D-glucans.. Its function is as follows. Has carboxylmethylcellulase activity. This chain is Endoglucanase A (cekA), found in Aspergillus kawachii (strain NBRC 4308) (White koji mold).